Consider the following 378-residue polypeptide: 3-dehydroquinate synthase (378 aa).

Residues 115–119 (GVVGD), 139–140 (TS), lysine 152, and lysine 161 contribute to the NAD(+) site. Zn(2+)-binding residues include glutamate 194, histidine 256, and histidine 275.

This sequence belongs to the sugar phosphate cyclases superfamily. Dehydroquinate synthase family. Co(2+) is required as a cofactor. Requires Zn(2+) as cofactor. NAD(+) serves as cofactor.

Its subcellular location is the cytoplasm. It carries out the reaction 7-phospho-2-dehydro-3-deoxy-D-arabino-heptonate = 3-dehydroquinate + phosphate. It functions in the pathway metabolic intermediate biosynthesis; chorismate biosynthesis; chorismate from D-erythrose 4-phosphate and phosphoenolpyruvate: step 2/7. Its function is as follows. Catalyzes the conversion of 3-deoxy-D-arabino-heptulosonate 7-phosphate (DAHP) to dehydroquinate (DHQ). The sequence is that of 3-dehydroquinate synthase from Brucella abortus biovar 1 (strain 9-941).